Reading from the N-terminus, the 636-residue chain is Protein BCAP (636 aa).

Coiled coils occupy residues 36 to 97, 141 to 220, 249 to 325, 377 to 484, and 519 to 631; these read LSCL…EQKE, ESEN…WNLQ, YKQR…HGKN, ISSE…ECQE, and LEEE…KMNS.

Belongs to the ODF2 family. In terms of tissue distribution, mainly expressed in trachea and testis. Not detected in bone marrow, bladder, leukocytes. Only weakly detected in tongue, stomach, brain and ovaries.

Its subcellular location is the cytoplasm. It is found in the cytoskeleton. The protein localises to the microtubule organizing center. It localises to the centrosome. The protein resides in the centriole. Its subcellular location is the centriolar satellite. It is found in the cilium basal body. Acts as a suppressor of ciliogenesis, specifically, the initiation of ciliogenesis. This is Protein BCAP from Homo sapiens (Human).